We begin with the raw amino-acid sequence, 1549 residues long: Trichohyalin (1549 aa).

The interval 1–91 is S-100-like; sequence MSPLLRSIFN…AAACYYALGQ (91 aa). 2 consecutive EF-hand domains span residues 23 to 48 and 49 to 84; these read CDGT…LRKP and HDPE…VAAA. Residues Thr-27, Asp-32, Asp-62, Asp-64, Asp-66, and Glu-73 each coordinate Ca(2+). Disordered stretches follow at residues 97–125, 157–180, 262–359, and 404–448; these read EKEA…PQDR, LQRR…GREL, LRRK…KQEQ, and QREK…RQER. Composition is skewed to basic and acidic residues over residues 171–180, 262–278, and 317–335; these read LQQRPKGREL, LRRK…RQEQ, and HRQE…ERQQ. Positions 336-348 are enriched in low complexity; the sequence is EQQISEEVQSLQE. Residues 349-359 show a composition bias toward basic and acidic residues; that stretch reads DQGRQRLKQEQ. A run of 14 repeats spans residues 413–448, 449–476, 477–504, 505–532, 533–560, 561–588, 589–616, 617–644, 645–678, 679–706, 707–742, 743–771, 772–796, and 797–832. The segment at 413–832 is 14 X 28 AA approximate tandem repeats; sequence ERQYREVELQ…ECEKRRRQEL (420 aa). Disordered stretches follow at residues 782-803, 839-942, and 980-1000; these read REEE…YREE, EELQ…RKFR, and QLRQ…ERDR. Basic and acidic residues-rich tracts occupy residues 850-884, 895-918, and 925-942; these read FRDD…DSWV, PLQD…KRDS, and LLER…RKFR. 23 repeat units span residues 938–961, 962–985, 986–1021, 1022–1044, 1045–1067, 1068–1090, 1091–1121, 1122–1144, 1145–1167, 1168–1197, 1198–1227, 1228–1250, 1251–1273, 1274–1296, 1297–1319, 1320–1342, 1343–1368, 1369–1391, 1392–1416, 1417–1439, 1440–1461, 1462–1484, and 1485–1507. The interval 938–1507 is 23 X 23 AA approximate tandem repeats; the sequence is DRKFREEEQL…ERDVQQSRRQ (570 aa). Residues 1489 to 1523 show a composition bias toward basic and acidic residues; it reads QQEEQKRRQERDVQQSRRQVWEEDKGRRQVLEAGK. The disordered stretch occupies residues 1489–1549; it reads QQEEQKRRQE…IQEQRSQYRP (61 aa).

Belongs to the S100-fused protein family. In terms of assembly, homodimer. In terms of processing, substrate of transglutaminase. Some 200 arginines are probably converted to citrullines by peptidylarginine deimidase. Found in the hard keratinizing tissues such as the inner root sheath (IRS) of hair follicles and medulla, and in the epithelia of the tongue, hoof and rumen.

Intermediate filament-associated protein that associates in regular arrays with keratin intermediate filaments (KIF) of the inner root sheath cells of the hair follicle and the granular layer of the epidermis. It later becomes cross-linked to KIF by isodipeptide bonds. It may serve as scaffold protein, together with involucrin, in the organization of the cell envelope or even anchor the cell envelope to the KIF network. It may be involved in its own calcium-dependent postsynthetic processing during terminal differentiation. The chain is Trichohyalin (TCHH) from Ovis aries (Sheep).